A 324-amino-acid polypeptide reads, in one-letter code: Probable pectinesterase A (324 aa).

Residues 1 to 19 (MHGSLLKLALLSFSLASSA) form the signal peptide. Substrate is bound at residue Q142. The active-site Proton donor is D165. Catalysis depends on D186, which acts as the Nucleophile. Substrate-binding residues include R246 and W248. An N-linked (GlcNAc...) asparagine glycan is attached at N285.

It belongs to the pectinesterase family.

The protein resides in the secreted. The enzyme catalyses [(1-&gt;4)-alpha-D-galacturonosyl methyl ester](n) + n H2O = [(1-&gt;4)-alpha-D-galacturonosyl](n) + n methanol + n H(+). It participates in glycan metabolism; pectin degradation; 2-dehydro-3-deoxy-D-gluconate from pectin: step 1/5. Functionally, involved in maceration and soft-rotting of plant tissue. This is Probable pectinesterase A (pmeA) from Aspergillus flavus (strain ATCC 200026 / FGSC A1120 / IAM 13836 / NRRL 3357 / JCM 12722 / SRRC 167).